A 494-amino-acid polypeptide reads, in one-letter code: Guanosine-5'-triphosphate,3'-diphosphate pyrophosphatase (494 aa).

Belongs to the GppA/Ppx family. GppA subfamily.

The catalysed reaction is guanosine 3'-diphosphate 5'-triphosphate + H2O = guanosine 3',5'-bis(diphosphate) + phosphate + H(+). The protein operates within purine metabolism; ppGpp biosynthesis; ppGpp from GTP: step 2/2. Its function is as follows. Catalyzes the conversion of pppGpp to ppGpp. Guanosine pentaphosphate (pppGpp) is a cytoplasmic signaling molecule which together with ppGpp controls the 'stringent response', an adaptive process that allows bacteria to respond to amino acid starvation, resulting in the coordinated regulation of numerous cellular activities. The polypeptide is Guanosine-5'-triphosphate,3'-diphosphate pyrophosphatase (Shigella flexneri serotype 5b (strain 8401)).